The primary structure comprises 370 residues: Queuine tRNA-ribosyltransferase (370 aa).

The active-site Proton acceptor is Asp89. Residues 89-93 (DSGGF), Asp143, Gln187, and Gly214 contribute to the substrate site. An RNA binding region spans residues 245-251 (GVGTPED). The Nucleophile role is filled by Asp264. Residues 269–273 (TRNAR) form an RNA binding; important for wobble base 34 recognition region. Residues Cys302, Cys304, Cys307, and His333 each contribute to the Zn(2+) site.

This sequence belongs to the queuine tRNA-ribosyltransferase family. Homodimer. Within each dimer, one monomer is responsible for RNA recognition and catalysis, while the other monomer binds to the replacement base PreQ1. It depends on Zn(2+) as a cofactor.

The enzyme catalyses 7-aminomethyl-7-carbaguanine + guanosine(34) in tRNA = 7-aminomethyl-7-carbaguanosine(34) in tRNA + guanine. It functions in the pathway tRNA modification; tRNA-queuosine biosynthesis. Functionally, catalyzes the base-exchange of a guanine (G) residue with the queuine precursor 7-aminomethyl-7-deazaguanine (PreQ1) at position 34 (anticodon wobble position) in tRNAs with GU(N) anticodons (tRNA-Asp, -Asn, -His and -Tyr). Catalysis occurs through a double-displacement mechanism. The nucleophile active site attacks the C1' of nucleotide 34 to detach the guanine base from the RNA, forming a covalent enzyme-RNA intermediate. The proton acceptor active site deprotonates the incoming PreQ1, allowing a nucleophilic attack on the C1' of the ribose to form the product. After dissociation, two additional enzymatic reactions on the tRNA convert PreQ1 to queuine (Q), resulting in the hypermodified nucleoside queuosine (7-(((4,5-cis-dihydroxy-2-cyclopenten-1-yl)amino)methyl)-7-deazaguanosine). The protein is Queuine tRNA-ribosyltransferase of Azoarcus sp. (strain BH72).